The following is a 358-amino-acid chain: Ribosomal RNA large subunit methyltransferase M (358 aa).

Residues serine 191, 224–227, aspartate 243, aspartate 263, and aspartate 279 each bind S-adenosyl-L-methionine; that span reads APGG. The active-site Proton acceptor is lysine 308.

It belongs to the class I-like SAM-binding methyltransferase superfamily. RNA methyltransferase RlmE family. RlmM subfamily. As to quaternary structure, monomer.

The protein resides in the cytoplasm. It carries out the reaction cytidine(2498) in 23S rRNA + S-adenosyl-L-methionine = 2'-O-methylcytidine(2498) in 23S rRNA + S-adenosyl-L-homocysteine + H(+). In terms of biological role, catalyzes the 2'-O-methylation at nucleotide C2498 in 23S rRNA. The sequence is that of Ribosomal RNA large subunit methyltransferase M from Marinobacter nauticus (strain ATCC 700491 / DSM 11845 / VT8) (Marinobacter aquaeolei).